We begin with the raw amino-acid sequence, 142 residues long: Large ribosomal subunit protein uL11 (142 aa).

It belongs to the universal ribosomal protein uL11 family. As to quaternary structure, part of the ribosomal stalk of the 50S ribosomal subunit. Interacts with L10 and the large rRNA to form the base of the stalk. L10 forms an elongated spine to which L12 dimers bind in a sequential fashion forming a multimeric L10(L12)X complex. One or more lysine residues are methylated.

Functionally, forms part of the ribosomal stalk which helps the ribosome interact with GTP-bound translation factors. The protein is Large ribosomal subunit protein uL11 of Acinetobacter baylyi (strain ATCC 33305 / BD413 / ADP1).